A 66-amino-acid chain; its full sequence is Cold shock protein CspB (66 aa).

Residues 4–63 (GKVKWFNNEKGYGFIEVEGGSDVFVHFTAIQGEGFKSLEEGQEVSFEIVQGNRGPQAANV) form the CSD domain.

As to quaternary structure, homodimer.

Its subcellular location is the cytoplasm. In terms of biological role, affects cell viability at low temperatures. This Geobacillus stearothermophilus (Bacillus stearothermophilus) protein is Cold shock protein CspB (cspB).